The sequence spans 138 residues: Small ribosomal subunit protein uS11c (138 aa).

The interval 1–22 is disordered; sequence MTKPIPRIGSRRNGRIGSRKNA. The segment covering 9–22 has biased composition (basic residues); that stretch reads GSRRNGRIGSRKNA.

The protein belongs to the universal ribosomal protein uS11 family. Part of the 30S ribosomal subunit.

It localises to the plastid. It is found in the chloroplast. The polypeptide is Small ribosomal subunit protein uS11c (Dioscorea elephantipes (Elephant's foot yam)).